We begin with the raw amino-acid sequence, 258 residues long: Imidazole glycerol phosphate synthase subunit HisF (258 aa).

Residues Asp-11 and Asp-130 contribute to the active site.

This sequence belongs to the HisA/HisF family. As to quaternary structure, heterodimer of HisH and HisF.

It localises to the cytoplasm. It catalyses the reaction 5-[(5-phospho-1-deoxy-D-ribulos-1-ylimino)methylamino]-1-(5-phospho-beta-D-ribosyl)imidazole-4-carboxamide + L-glutamine = D-erythro-1-(imidazol-4-yl)glycerol 3-phosphate + 5-amino-1-(5-phospho-beta-D-ribosyl)imidazole-4-carboxamide + L-glutamate + H(+). It participates in amino-acid biosynthesis; L-histidine biosynthesis; L-histidine from 5-phospho-alpha-D-ribose 1-diphosphate: step 5/9. IGPS catalyzes the conversion of PRFAR and glutamine to IGP, AICAR and glutamate. The HisF subunit catalyzes the cyclization activity that produces IGP and AICAR from PRFAR using the ammonia provided by the HisH subunit. This Bradyrhizobium sp. (strain ORS 278) protein is Imidazole glycerol phosphate synthase subunit HisF.